We begin with the raw amino-acid sequence, 264 residues long: Indole-3-glycerol phosphate synthase (264 aa).

Belongs to the TrpC family.

It carries out the reaction 1-(2-carboxyphenylamino)-1-deoxy-D-ribulose 5-phosphate + H(+) = (1S,2R)-1-C-(indol-3-yl)glycerol 3-phosphate + CO2 + H2O. The protein operates within amino-acid biosynthesis; L-tryptophan biosynthesis; L-tryptophan from chorismate: step 4/5. The sequence is that of Indole-3-glycerol phosphate synthase from Xylella fastidiosa (strain M23).